Reading from the N-terminus, the 348-residue chain is Dihydroorotase (348 aa).

Residues His-17 and His-19 each coordinate Zn(2+). Residues 19-21 (HLR) and Asn-45 contribute to the substrate site. Zn(2+) contacts are provided by Lys-103, His-140, and His-178. Lys-103 is modified (N6-carboxylysine). Residue His-140 coordinates substrate. Leu-223 is a substrate binding site. Position 251 (Asp-251) interacts with Zn(2+). Asp-251 is an active-site residue. His-255 and Ala-267 together coordinate substrate.

Belongs to the metallo-dependent hydrolases superfamily. DHOase family. Class II DHOase subfamily. In terms of assembly, homodimer. Requires Zn(2+) as cofactor.

The enzyme catalyses (S)-dihydroorotate + H2O = N-carbamoyl-L-aspartate + H(+). The protein operates within pyrimidine metabolism; UMP biosynthesis via de novo pathway; (S)-dihydroorotate from bicarbonate: step 3/3. Functionally, catalyzes the reversible cyclization of carbamoyl aspartate to dihydroorotate. The polypeptide is Dihydroorotase (Salmonella paratyphi A (strain ATCC 9150 / SARB42)).